The following is a 237-amino-acid chain: Regulator of G-protein signaling 9-binding protein (237 aa).

At methionine 1–lysine 214 the chain is on the cytoplasmic side. Coiled coils occupy residues glycine 29–leucine 58 and valine 144–asparagine 169. The interval glutamate 153–glutamate 202 is SNARE-like. A helical; Anchor for type IV membrane protein membrane pass occupies residues alanine 215 to alanine 234. Over lysine 235 to serine 237 the chain is Extracellular.

This sequence belongs to the RGS7BP/RGS9BP family. In terms of assembly, specifically interacts with isoform RGS9-1 of RGS9. Component of the RGS9-1-Gbeta5 complex composed of RGS9-1, Gbeta5 (GNB5) and RGS9BP. In terms of tissue distribution, specifically expressed in the retina. Only present in photoreceptors (at protein level).

It is found in the membrane. Regulator of G protein-coupled receptor (GPCR) signaling in phototransduction. Participates in the recovery phase of visual transduction via its interaction with RGS9-1 isoform. Acts as a membrane-anchor that mediates the targeting of RGS9-1 to the photoreceptor outer segment, where phototransduction takes place. Enhances the ability of RGS9-1 to stimulate G protein GTPase activity, allowing the visual signal to be terminated on the physiologically time scale. It also controls the proteolytic stability of RGS9-1, probably by protecting it from degradation. This is Regulator of G-protein signaling 9-binding protein (RGS9BP) from Bos taurus (Bovine).